The following is a 234-amino-acid chain: MVDQIRSPSWKSGFPSHQHQQGSYWTQGSTSSYLSTAKTAGVLGDVAEKANKIAPILTTAAVIYEMYQVGKEVKKDYHHGTTRNTIKTVATTATTYASASAAALAGSSIGSAIFPGIGTIFGGIIGGIAGGLFGGHVAETASEQILTHVKYDVTTLTCKECGKDYDWKKYEEAQGVCSCQLQIVLSNDAATKLCAILAEKIQSPSQTSNYAFNSYLCYYYLHIFACLNKILNHK.

A disordered region spans residues 1 to 23 (MVDQIRSPSWKSGFPSHQHQQGS).

This is an uncharacterized protein from Caenorhabditis elegans.